A 401-amino-acid chain; its full sequence is Phosphoglycerate kinase (401 aa).

Substrate-binding positions include 24 to 26 (DFN), arginine 40, 63 to 66 (HFGR), arginine 122, and arginine 155. Residues lysine 206, glycine 297, glutamate 328, and 357–360 (GGDS) each bind ATP.

This sequence belongs to the phosphoglycerate kinase family. As to quaternary structure, monomer.

The protein localises to the cytoplasm. The enzyme catalyses (2R)-3-phosphoglycerate + ATP = (2R)-3-phospho-glyceroyl phosphate + ADP. Its pathway is carbohydrate degradation; glycolysis; pyruvate from D-glyceraldehyde 3-phosphate: step 2/5. This Acaryochloris marina (strain MBIC 11017) protein is Phosphoglycerate kinase.